The chain runs to 443 residues: Dynein regulatory complex protein 9 (443 aa).

2 disordered regions span residues 1 to 34 and 415 to 443; these read MEED…TVEE and GFKM…GKKK. The IQ domain maps to 393–422; it reads ELKSVIKLQAWWRGTMIRREIGGFKMPKDK. The segment covering 415-430 has biased composition (basic and acidic residues); the sequence is GFKMPKDKVDSKDSKG. Over residues 431 to 443 the composition is skewed to basic residues; that stretch reads KGKGKDKRRGKKK.

The protein belongs to the DRC9 family. Component of the nexin-dynein regulatory complex (N-DRC). Interacts (via IQ domain) with CALM when calcium levels are low. Does not interact with CALM in the presence of Ca(2+). Interacts with the HSP70 proteins HSPA1L and HSPA8. May form a complex with CAMK4 and HSP70.

Its subcellular location is the cytoplasm. The protein resides in the cell projection. It is found in the cilium. The protein localises to the flagellum. It localises to the cytoskeleton. Its subcellular location is the flagellum axoneme. Component of the nexin-dynein regulatory complex (N-DRC), a key regulator of ciliary/flagellar motility which maintains the alignment and integrity of the distal axoneme and regulates microtubule sliding in motile axonemes. Binds calmodulin when cellular Ca(2+) levels are low and thereby contributes to the regulation of calcium and calmodulin-dependent protein kinase IV (CAMK4) activity; contributes to the regulation of CAMK4 signaling cascades. Required for normal axoneme assembly in sperm flagella, normal sperm tail formation and for male fertility. In Homo sapiens (Human), this protein is Dynein regulatory complex protein 9 (IQCG).